The primary structure comprises 138 residues: MNIIDRFEQENISKRTANKKIPDFEAGDTVKVTVKIIDRSIEKDGKEKLTERFQAYEGVVIAKRNRGITSSFLVRKISHGEGVERRFMTYSPMVHSIDVVKYGVVRRAKLYYLRNRSGKSARIKERHIPIAKTKAAKA.

Belongs to the bacterial ribosomal protein bL19 family.

Functionally, this protein is located at the 30S-50S ribosomal subunit interface and may play a role in the structure and function of the aminoacyl-tRNA binding site. In Rickettsia conorii (strain ATCC VR-613 / Malish 7), this protein is Large ribosomal subunit protein bL19.